Here is a 295-residue protein sequence, read N- to C-terminus: Small ribosomal subunit protein uS2 (295 aa).

The segment at K263–A295 is disordered. Over residues E278–A295 the composition is skewed to basic and acidic residues.

It belongs to the universal ribosomal protein uS2 family.

In Rickettsia peacockii (strain Rustic), this protein is Small ribosomal subunit protein uS2.